The following is a 159-amino-acid chain: RNA pyrophosphohydrolase (159 aa).

The Nudix hydrolase domain occupies 6-149 (GFRPNVGIIL…KREVYRRALK (144 aa)). Positions 38 to 59 (GGINDRESPEEALYRELNEEVG) match the Nudix box motif.

The protein belongs to the Nudix hydrolase family. RppH subfamily. The cofactor is a divalent metal cation.

Functionally, accelerates the degradation of transcripts by removing pyrophosphate from the 5'-end of triphosphorylated RNA, leading to a more labile monophosphorylated state that can stimulate subsequent ribonuclease cleavage. The sequence is that of RNA pyrophosphohydrolase from Ectopseudomonas mendocina (strain ymp) (Pseudomonas mendocina).